Consider the following 489-residue polypeptide: Rhamnulokinase (489 aa).

13-17 provides a ligand contact to ATP; the sequence is ASSGR. Residues Cys68 and Cys222 are joined by a disulfide bond. Substrate-binding positions include Gly83 and 236 to 238; that span reads HDT. The active-site Proton acceptor is the Asp237. Position 259 (Thr259) interacts with ATP. A substrate-binding site is contributed by Asn296. Residue Gln304 participates in ATP binding. The cysteines at positions 353 and 370 are disulfide-linked. Residue Gly402 participates in ATP binding. The cysteines at positions 413 and 417 are disulfide-linked.

Belongs to the rhamnulokinase family. Mg(2+) serves as cofactor.

The catalysed reaction is L-rhamnulose + ATP = L-rhamnulose 1-phosphate + ADP + H(+). It functions in the pathway carbohydrate degradation; L-rhamnose degradation; glycerone phosphate from L-rhamnose: step 2/3. Functionally, involved in the catabolism of L-rhamnose (6-deoxy-L-mannose). Catalyzes the transfer of the gamma-phosphate group from ATP to the 1-hydroxyl group of L-rhamnulose to yield L-rhamnulose 1-phosphate. The polypeptide is Rhamnulokinase (Salmonella typhimurium (strain LT2 / SGSC1412 / ATCC 700720)).